The sequence spans 805 residues: Acetyl-CoA decarbonylase/synthase complex subunit alpha 3 (805 aa).

[4Fe-4S] cluster is bound by residues Cys-72, Cys-75, Cys-76, Cys-78, Cys-83, and Cys-93. Position 116 (His-116) interacts with CO. Residues His-249, Cys-277, and Cys-322 each contribute to the [Ni-4Fe-4S] cluster site. 4Fe-4S ferredoxin-type domains lie at 407–435 (EEFK…IPEA) and 445–474 (EYLE…LNVL). [4Fe-4S] cluster contacts are provided by Cys-416, Cys-419, Cys-422, Cys-426, Cys-454, Cys-457, Cys-460, and Cys-464. [Ni-4Fe-4S] cluster-binding residues include Cys-522, Cys-551, and Cys-586.

Belongs to the Ni-containing carbon monoxide dehydrogenase family. Heterotetramer of two alpha and two epsilon subunits. The ACDS complex is made up of alpha, epsilon, beta, gamma and delta subunits with a probable stoichiometry of (alpha(2)epsilon(2))(4)-beta(8)-(gamma(1)delta(1))(8). The cofactor is [4Fe-4S] cluster. [Ni-4Fe-4S] cluster serves as cofactor.

The catalysed reaction is CO + 2 oxidized [2Fe-2S]-[ferredoxin] + H2O = 2 reduced [2Fe-2S]-[ferredoxin] + CO2 + 2 H(+). It functions in the pathway one-carbon metabolism; methanogenesis from acetate. Part of the ACDS complex that catalyzes the reversible cleavage of acetyl-CoA, allowing growth on acetate as sole source of carbon and energy. The alpha-epsilon subcomponent functions as a carbon monoxide dehydrogenase. The sequence is that of Acetyl-CoA decarbonylase/synthase complex subunit alpha 3 from Methanosarcina acetivorans (strain ATCC 35395 / DSM 2834 / JCM 12185 / C2A).